The following is a 1051-amino-acid chain: Serine/threonine-protein kinase ULK1 (1051 aa).

The region spanning 16-278 (FSRKDLIGHG…FDEFFHHPFL (263 aa)) is the Protein kinase domain. ATP is bound by residues 22–30 (IGHGAFAVV) and lysine 46. Aspartate 138 functions as the Proton acceptor in the catalytic mechanism. Lysine 162 bears the N6-acetyllysine mark. Disordered stretches follow at residues 283 to 323 (PIKK…EMPQ), 335 to 358 (AGFL…DDFV), and 394 to 554 (GLES…CRLH). The segment at 287–416 (SPPVPVPSYP…TCSSSPSPSG (130 aa)) is interaction with GABARAP and GABARAPL2. 3 stretches are compositionally biased toward low complexity: residues 295-318 (YPSS…PPSL), 340-349 (GSRDSGGSSK), and 400-423 (RTPS…PFSS). Residue serine 317 is modified to Phosphoserine; by AMPK. Phosphoserine is present on residues serine 403 and serine 450. Residues 437–459 (QVHNYQRIEQNLQSPTQQQTARS) show a composition bias toward polar residues. Threonine 456 is modified (phosphothreonine). Serine 467, serine 477, serine 479, and serine 521 each carry phosphoserine. Phosphoserine; by AMPK is present on serine 555. The residue at position 574 (threonine 574) is a Phosphothreonine. The residue at position 606 (lysine 606) is an N6-acetyllysine. Threonine 635 carries the post-translational modification Phosphothreonine. Serine 637 is subject to Phosphoserine; by AMPK. Serine 638 carries the phosphoserine modification. Disordered stretches follow at residues 661–686 (PDLS…DTRG) and 727–787 (APSA…TGSS). Residues 731 to 745 (GFGGTLHPGARGGGA) show a composition bias toward gly residues. Phosphoserine; by MTOR is present on serine 757. Phosphoserine is present on serine 774. Residues 774–787 (SVGSSSSLGSTGSS) show a composition bias toward low complexity. A Phosphoserine; by AMPK modification is found at serine 777. Residues 829-1051 (PDLPEETLME…LSALLSGVYA (223 aa)) form a C-terminal domain; mediates interaction with SESN2 region.

Belongs to the protein kinase superfamily. Ser/Thr protein kinase family. APG1/unc-51/ULK1 subfamily. As to quaternary structure, interacts with GABARAP and GABARAPL2. Interacts (via C-terminus) with ATG13. Part of a complex consisting of ATG13, ATG101, ULK1 and RB1CC1. Associates with the mammalian target of rapamycin complex 1 (mTORC1) through an interaction with RPTOR; the association depends on nutrient conditions and is reduced during starvation. Interacts with FEZ1; SCOC interferes with FEZ1-binding. Interacts with TBC1D14. Interacts (phosphorylated form) with TRIM5. When phosphorylated at Ser-317, interacts with MEFV and BECN1 simultaneously. Interacts with TRIM21 and IRF3, in the presence of TRIM21. Interacts with SESN2. Interacts with SQSTM1. Interacts with C9orf72. Interacts with WDR45. Interacts with ATG13; this interaction is increased in the absence of TMEM39A. Interacts with WIPI2. Interacts with ATP2A2. Interacts with AMBRA1. Interacts with Irgm1; promoting the coassembly of ULK1 and BECN1. Autophosphorylated. Phosphorylated under nutrient-rich conditions; dephosphorylated during starvation or following treatment with rapamycin. In response to nutrient limitation, phosphorylated and activated by AMPK, leading to activate autophagy. Under nutrient sufficiency, phosphorylated by MTOR/mTOR, disrupting the interaction with AMPK and preventing activation of ULK1. Post-translationally, ubiquitinated via 'Lys-63'-linkage by a complex composed of AMBRA1 and TRAF6 following autophagy induction, promoting ULK1 stability and kinase activity. Deubiquitinated by USP20; leading to ULK1 stability and autophagy initiation. In terms of processing, acetylated by KAT5/TIP60 under autophagy induction, promoting protein kinase activity.

It localises to the cytoplasm. The protein localises to the cytosol. Its subcellular location is the preautophagosomal structure. It catalyses the reaction L-seryl-[protein] + ATP = O-phospho-L-seryl-[protein] + ADP + H(+). The catalysed reaction is L-threonyl-[protein] + ATP = O-phospho-L-threonyl-[protein] + ADP + H(+). Acetylation by KAT5/TIP60 stimulates the protein kinase activity. The protein kinase activity is activated by unanchored 'Lys-63'-linked polyubiquitin chains: unanchored 'Lys-63'-linked polyubiquitin chains are catalyzed by TRIM32 in an AMBRA1-dependent manner. In terms of biological role, serine/threonine-protein kinase involved in autophagy in response to starvation. Acts upstream of phosphatidylinositol 3-kinase PIK3C3 to regulate the formation of autophagophores, the precursors of autophagosomes. Part of regulatory feedback loops in autophagy: acts both as a downstream effector and negative regulator of mammalian target of rapamycin complex 1 (mTORC1) via interaction with RPTOR. Activated via phosphorylation by AMPK and also acts as a regulator of AMPK by mediating phosphorylation of AMPK subunits PRKAA1, PRKAB2 and PRKAG1, leading to negatively regulate AMPK activity. May phosphorylate ATG13/KIAA0652 and RPTOR; however such data need additional evidences. Plays a role early in neuronal differentiation and is required for granule cell axon formation. Also phosphorylates SESN2 and SQSTM1 to regulate autophagy. Phosphorylates FLCN, promoting autophagy. Phosphorylates AMBRA1 in response to autophagy induction, releasing AMBRA1 from the cytoskeletal docking site to induce autophagosome nucleation. Phosphorylates ATG4B, leading to inhibit autophagy by decreasing both proteolytic activation and delipidation activities of ATG4B. The protein is Serine/threonine-protein kinase ULK1 (Ulk1) of Mus musculus (Mouse).